Consider the following 204-residue polypeptide: Tic20 family protein Ycf60 (204 aa).

A run of 4 helical transmembrane segments spans residues 5 to 25 (LPSLIIIMLTTFSIILISFII), 87 to 107 (LMPLVIFYVTHPTLAVIIFFI), 133 to 153 (ILLFLINSLLGATFRALPIEF), and 159 to 179 (GLMMCNTLFWFVLSTISYSII).

It belongs to the Tic20 family.

It localises to the plastid. The protein resides in the chloroplast membrane. The protein is Tic20 family protein Ycf60 (ycf60) of Gracilaria tenuistipitata var. liui (Red alga).